A 460-amino-acid polypeptide reads, in one-letter code: Probable Xaa-Pro aminopeptidase VDBG_02538 (460 aa).

Mn(2+) contacts are provided by Asp-256, Asp-267, Glu-390, and Glu-430.

It belongs to the peptidase M24B family. Mn(2+) serves as cofactor.

It carries out the reaction Release of any N-terminal amino acid, including proline, that is linked to proline, even from a dipeptide or tripeptide.. Its function is as follows. Catalyzes the removal of a penultimate prolyl residue from the N-termini of peptides. This Verticillium alfalfae (strain VaMs.102 / ATCC MYA-4576 / FGSC 10136) (Verticillium wilt of alfalfa) protein is Probable Xaa-Pro aminopeptidase VDBG_02538.